The chain runs to 907 residues: Polyphosphoinositide phosphatase (907 aa).

Residues 154 to 547 (FQNVDLSSNF…GDTLSLQYGG (394 aa)) form the SAC domain. The interval 707–788 (GIDPSPFTVR…VKMTDAGDSA (82 aa)) is disordered. Positions 758-770 (SEDDSGTDREEEG) are enriched in acidic residues.

As to quaternary structure, component of the PI(3,5)P2 regulatory complex/PAS complex, at least composed of PIKFYVE, FIG4 and VAC14. VAC14 nucleates the assembly of the complex and serves as a scaffold by pentamerizing into a star-shaped structure, which can bind a single copy each of PIKFYVE and FIG4 and coordinates their activities.

It localises to the endosome membrane. It catalyses the reaction a 1,2-diacyl-sn-glycero-3-phospho-(1D-myo-inositol-3,5-bisphosphate) + H2O = a 1,2-diacyl-sn-glycero-3-phospho-(1D-myo-inositol-3-phosphate) + phosphate. It carries out the reaction a 1,2-diacyl-sn-glycero-3-phospho-(1D-myo-inositol-4,5-bisphosphate) + H2O = a 1,2-diacyl-sn-glycero-3-phospho-(1D-myo-inositol 4-phosphate) + phosphate. The enzyme catalyses a 1,2-diacyl-sn-glycero-3-phospho-(1D-myo-inositol-3,4,5-trisphosphate) + H2O = a 1,2-diacyl-sn-glycero-3-phospho-(1D-myo-inositol-3,4-bisphosphate) + phosphate. The catalysed reaction is O-phospho-L-seryl-[protein] + H2O = L-seryl-[protein] + phosphate. Dual specificity phosphatase component of the PI(3,5)P2 regulatory complex which regulates both the synthesis and turnover of phosphatidylinositol 3,5-bisphosphate (PtdIns(3,5)P2). Catalyzes the dephosphorylation of phosphatidylinositol 3,5-bisphosphate (PtdIns(3,5)P2) to form phosphatidylinositol 3-phosphate. Has serine-protein phosphatase activity acting on PIKfyve to stimulate its lipid kinase activity, its catalytically activity being required for maximal PI(3,5)P2 production. In vitro, hydrolyzes all three D5-phosphorylated polyphosphoinositide and although displaying preferences for PtdIns(3,5)P2, it is capable of hydrolyzing PtdIns(3,4,5)P3 and PtdIns(4,5)P2, at least in vitro. This Homo sapiens (Human) protein is Polyphosphoinositide phosphatase.